A 333-amino-acid polypeptide reads, in one-letter code: Ketol-acid reductoisomerase (NADP(+)) (333 aa).

The 171-residue stretch at 1–171 (MSNDTQPKIA…GGARANIIKT (171 aa)) folds into the KARI N-terminal Rossmann domain. NADP(+) is bound by residues 14 to 17 (YGSQ), Arg37, Thr42, and 72 to 75 (DMVQ). His97 is an active-site residue. Gly123 provides a ligand contact to NADP(+). Residues 172 to 317 (TFKEETETDL…KKLRAKMVWL (146 aa)) enclose the KARI C-terminal knotted domain. Mg(2+)-binding residues include Asp180, Glu184, Glu216, and Glu220. Residue Ser241 coordinates substrate.

Belongs to the ketol-acid reductoisomerase family. The cofactor is Mg(2+).

The catalysed reaction is (2R)-2,3-dihydroxy-3-methylbutanoate + NADP(+) = (2S)-2-acetolactate + NADPH + H(+). It catalyses the reaction (2R,3R)-2,3-dihydroxy-3-methylpentanoate + NADP(+) = (S)-2-ethyl-2-hydroxy-3-oxobutanoate + NADPH + H(+). It participates in amino-acid biosynthesis; L-isoleucine biosynthesis; L-isoleucine from 2-oxobutanoate: step 2/4. It functions in the pathway amino-acid biosynthesis; L-valine biosynthesis; L-valine from pyruvate: step 2/4. In terms of biological role, involved in the biosynthesis of branched-chain amino acids (BCAA). Catalyzes an alkyl-migration followed by a ketol-acid reduction of (S)-2-acetolactate (S2AL) to yield (R)-2,3-dihydroxy-isovalerate. In the isomerase reaction, S2AL is rearranged via a Mg-dependent methyl migration to produce 3-hydroxy-3-methyl-2-ketobutyrate (HMKB). In the reductase reaction, this 2-ketoacid undergoes a metal-dependent reduction by NADPH to yield (R)-2,3-dihydroxy-isovalerate. The chain is Ketol-acid reductoisomerase (NADP(+)) from Xanthomonas euvesicatoria pv. vesicatoria (strain 85-10) (Xanthomonas campestris pv. vesicatoria).